A 118-amino-acid chain; its full sequence is UPF0102 protein RSal33209_1090 (118 aa).

It belongs to the UPF0102 family.

This is UPF0102 protein RSal33209_1090 from Renibacterium salmoninarum (strain ATCC 33209 / DSM 20767 / JCM 11484 / NBRC 15589 / NCIMB 2235).